A 131-amino-acid chain; its full sequence is Large ribosomal subunit protein bL19 (131 aa).

Basic and acidic residues predominate over residues 111–124 (RIAERAERGSEKGK). Residues 111 to 131 (RIAERAERGSEKGKTTPAAAE) form a disordered region.

It belongs to the bacterial ribosomal protein bL19 family.

Functionally, this protein is located at the 30S-50S ribosomal subunit interface and may play a role in the structure and function of the aminoacyl-tRNA binding site. In Methylobacterium nodulans (strain LMG 21967 / CNCM I-2342 / ORS 2060), this protein is Large ribosomal subunit protein bL19.